The chain runs to 289 residues: ATP synthase gamma chain (289 aa).

The protein belongs to the ATPase gamma chain family. As to quaternary structure, F-type ATPases have 2 components, CF(1) - the catalytic core - and CF(0) - the membrane proton channel. CF(1) has five subunits: alpha(3), beta(3), gamma(1), delta(1), epsilon(1). CF(0) has three main subunits: a, b and c.

It is found in the cell membrane. Functionally, produces ATP from ADP in the presence of a proton gradient across the membrane. The gamma chain is believed to be important in regulating ATPase activity and the flow of protons through the CF(0) complex. The sequence is that of ATP synthase gamma chain from Lactococcus lactis subsp. lactis (strain IL1403) (Streptococcus lactis).